A 464-amino-acid chain; its full sequence is Protein FAM90A11 (464 aa).

3 disordered regions span residues 1-42 (MMAR…DPRL), 70-389 (PATL…HDGA), and 415-437 (HSPE…SEAP). 2 stretches are compositionally biased toward basic and acidic residues: residues 74–89 (GKKE…KPRV) and 97–114 (NKDK…DPQR). Residues 180 to 197 (LASLSPLRKASLSSSSSL) show a composition bias toward low complexity. Residues 341–356 (GPSTSPQMGRRTSAQV) show a composition bias toward polar residues.

The protein belongs to the FAM90 family.

This is Protein FAM90A11 from Homo sapiens (Human).